A 455-amino-acid chain; its full sequence is Serine--tRNA ligase (455 aa).

252–254 lines the L-serine pocket; that stretch reads TAE. ATP contacts are provided by residues 283 to 285 and Val299; that span reads RKE. Glu306 serves as a coordination point for L-serine. 370–373 contacts ATP; that stretch reads EVVS. Thr406 contacts L-serine.

It belongs to the class-II aminoacyl-tRNA synthetase family. Type-1 seryl-tRNA synthetase subfamily. In terms of assembly, homodimer. The tRNA molecule binds across the dimer.

Its subcellular location is the cytoplasm. The enzyme catalyses tRNA(Ser) + L-serine + ATP = L-seryl-tRNA(Ser) + AMP + diphosphate + H(+). The catalysed reaction is tRNA(Sec) + L-serine + ATP = L-seryl-tRNA(Sec) + AMP + diphosphate + H(+). Its pathway is aminoacyl-tRNA biosynthesis; selenocysteinyl-tRNA(Sec) biosynthesis; L-seryl-tRNA(Sec) from L-serine and tRNA(Sec): step 1/1. In terms of biological role, catalyzes the attachment of serine to tRNA(Ser). Is also able to aminoacylate tRNA(Sec) with serine, to form the misacylated tRNA L-seryl-tRNA(Sec), which will be further converted into selenocysteinyl-tRNA(Sec). The protein is Serine--tRNA ligase of Pyrococcus horikoshii (strain ATCC 700860 / DSM 12428 / JCM 9974 / NBRC 100139 / OT-3).